The chain runs to 80 residues: Protein FAM229B (80 aa).

The interval 1–45 (MPFRFGTQPRRFPVEGGDSSIELESGLSSSASCNGKETSPNRQLR) is disordered. Low complexity predominate over residues 15 to 32 (EGGDSSIELESGLSSSAS). A compositionally biased stretch (polar residues) spans 33–42 (CNGKETSPNR).

Belongs to the FAM229 family.

The sequence is that of Protein FAM229B (Fam229b) from Rattus norvegicus (Rat).